An 857-amino-acid chain; its full sequence is DNA mismatch repair protein MutS (857 aa).

Residue 608–615 participates in ATP binding; sequence GPNMSGKS.

The protein belongs to the DNA mismatch repair MutS family.

Functionally, this protein is involved in the repair of mismatches in DNA. It is possible that it carries out the mismatch recognition step. This protein has a weak ATPase activity. This is DNA mismatch repair protein MutS from Lactobacillus gasseri (strain ATCC 33323 / DSM 20243 / BCRC 14619 / CIP 102991 / JCM 1131 / KCTC 3163 / NCIMB 11718 / NCTC 13722 / AM63).